A 127-amino-acid polypeptide reads, in one-letter code: Fluoride-specific ion channel FluC (127 aa).

A run of 4 helical transmembrane segments spans residues 4–24 (LLLA…LLSM), 35–55 (LGTL…FAWF), 71–91 (TGFC…VFLL), and 103–123 (VFVN…LFSA). Na(+) is bound by residues Gly-75 and Thr-78.

It belongs to the fluoride channel Fluc/FEX (TC 1.A.43) family.

It is found in the cell inner membrane. The catalysed reaction is fluoride(in) = fluoride(out). With respect to regulation, na(+) is not transported, but it plays an essential structural role and its presence is essential for fluoride channel function. Fluoride-specific ion channel. Important for reducing fluoride concentration in the cell, thus reducing its toxicity. This Escherichia coli O7:K1 (strain IAI39 / ExPEC) protein is Fluoride-specific ion channel FluC.